Here is a 442-residue protein sequence, read N- to C-terminus: tRNA-2-methylthio-N(6)-dimethylallyladenosine synthase (442 aa).

An MTTase N-terminal domain is found at 3–120 (NKLYIRTFGC…LPNMLNDALN (118 aa)). 6 residues coordinate [4Fe-4S] cluster: cysteine 12, cysteine 49, cysteine 83, cysteine 157, cysteine 161, and cysteine 164. The Radical SAM core domain maps to 143–375 (RTNSVTAFVS…QKTINNNTEH (233 aa)). The TRAM domain maps to 378–440 (QLMIGSIQKV…GNSLMGDLLT (63 aa)).

This sequence belongs to the methylthiotransferase family. MiaB subfamily. Monomer. The cofactor is [4Fe-4S] cluster.

The protein localises to the cytoplasm. The catalysed reaction is N(6)-dimethylallyladenosine(37) in tRNA + (sulfur carrier)-SH + AH2 + 2 S-adenosyl-L-methionine = 2-methylsulfanyl-N(6)-dimethylallyladenosine(37) in tRNA + (sulfur carrier)-H + 5'-deoxyadenosine + L-methionine + A + S-adenosyl-L-homocysteine + 2 H(+). In terms of biological role, catalyzes the methylthiolation of N6-(dimethylallyl)adenosine (i(6)A), leading to the formation of 2-methylthio-N6-(dimethylallyl)adenosine (ms(2)i(6)A) at position 37 in tRNAs that read codons beginning with uridine. The polypeptide is tRNA-2-methylthio-N(6)-dimethylallyladenosine synthase (Vesicomyosocius okutanii subsp. Calyptogena okutanii (strain HA)).